A 378-amino-acid chain; its full sequence is Metalloendoproteinase 2-MMP (378 aa).

Positions 1–20 are cleaved as a signal peptide; it reads MRFCVFGFLSLFLIVSPASA. Residues 21–154 constitute a propeptide, activation peptide; that stretch reads WFFPNSTAVP…SRTHLHAVKR (134 aa). Asn-25, Asn-35, Asn-46, Asn-79, and Asn-102 each carry an N-linked (GlcNAc...) asparagine glycan. Residues 118-125 carry the Cysteine switch motif; that stretch reads PRCGNPDV. Cys-120 is a Zn(2+) binding site. N-linked (GlcNAc...) asparagine glycans are attached at residues Asn-127, Asn-143, and Asn-203. His-280 is a Zn(2+) binding site. The active site involves Glu-281. 2 residues coordinate Zn(2+): His-284 and His-290. Asn-330 carries an N-linked (GlcNAc...) asparagine glycan. Residue Ser-349 is the site of GPI-anchor amidated serine attachment. The propeptide at 350–378 is removed in mature form; it reads AAWRIDGSSRSTIVSLLLSTVGLVLWFLP.

This sequence belongs to the peptidase M10A family. Matrix metalloproteinases (MMPs) subfamily. Requires Zn(2+) as cofactor. As to expression, mostly expressed in roots, and, to a lower extent, in flowers, leaves and stems.

It localises to the cell membrane. With respect to regulation, repressed by acetohydroxamic acid (AHA). In terms of biological role, matrix metalloproteinases (MMPs) or matrixins may play a role in the degradation and remodeling of the extracellular matrix (ECM) during development or in response to stresses. Required for plant growth, morphogenesis, and development with particular relevance for flowering and senescence. Active on McaPLGLDpaAR-NH(2) (QF24) and myelin basic protein (MBP) and, to some extent, on beta-casein. This is Metalloendoproteinase 2-MMP from Arabidopsis thaliana (Mouse-ear cress).